Reading from the N-terminus, the 810-residue chain is Leucine--tRNA ligase (810 aa).

A 'HIGH' region motif is present at residues 43 to 53 (PYPSGTLHIGH). Positions 578-582 (KMSKS) match the 'KMSKS' region motif. Lysine 581 lines the ATP pocket.

Belongs to the class-I aminoacyl-tRNA synthetase family.

The protein resides in the cytoplasm. It catalyses the reaction tRNA(Leu) + L-leucine + ATP = L-leucyl-tRNA(Leu) + AMP + diphosphate. The protein is Leucine--tRNA ligase of Solibacter usitatus (strain Ellin6076).